The primary structure comprises 103 residues: ATP synthase subunit f, mitochondrial (103 aa).

The N-terminal 6 residues, 1-6 (MIFRRQ), are a transit peptide targeting the mitochondrion.

F-type ATP synthases have 2 components, the catalytic core F(1) and the membrane-embedded component F(0), linked together by a central stalk and a peripheral stalk. The central stalk, also called rotor shaft, is often seen as part of F(1). The peripheral stalk is seen as part of F(0). F(0) contains the membrane channel next to the rotor. F-type ATP synthases form dimers but each monomer functions independently in ATP generation. The dimer consists of 17 different polypeptides: ATP1 (subunit alpha, 3 molecules per monomer, part of F(1)), ATP2 (subunit beta, 3 copies per monomer, part of F(1)), ATP3 (subunit gamma, part of the central stalk), ATP4 (subunit b, part of the peripheral stalk), ATP5/OSCP (subunit 5/OSCP, part of the peripheral stalk), ATP6 (subunit a, part of the peripheral stalk), ATP7 (subunit d, part of the peripheral stalk), ATP8 (subunit 8, part of the peripheral stalk), OLI1 (subunit c, part of the rotor, 10 molecules per monomer), ATP14 (subunit h, part of the peripheral stalk), ATP15 (subunit epsilon, part of the central stalk), ATP16 (subunit delta, part of the central stalk), ATP17 (subunit f, part of the peripheral stalk), ATP18 (subunit i/j, part of the peripheral stalk), ATP19 (subunit k, dimer-specific, at interface between monomers), ATP20 (subunit g, at interface between monomers), TIM11 (subunit e, at interface between monomers).

The protein localises to the mitochondrion inner membrane. Its function is as follows. Mitochondrial membrane ATP synthase (F(1)F(0) ATP synthase or Complex V) produces ATP from ADP in the presence of a proton gradient across the membrane which is generated by electron transport complexes of the respiratory chain. F-type ATP synthases consist of two structural domains, F(1) - containing the extramembraneous catalytic core, and F(0) - containing the membrane proton channel, linked together by a central stalk and a peripheral stalk. During catalysis, ATP synthesis in the catalytic domain of F(1) is coupled via a rotary mechanism of the central stalk subunits to proton translocation. Part of the complex F(0) domain. Minor subunit located with subunit a/ATP6 in the membrane. In Yarrowia lipolytica (strain CLIB 122 / E 150) (Yeast), this protein is ATP synthase subunit f, mitochondrial.